Consider the following 454-residue polypeptide: Gustatory and odorant receptor 21a (454 aa).

Residues 1-114 lie on the Cytoplasmic side of the membrane; sequence MTFLDRTMSF…LPRTGYSWGS (114 aa). A helical transmembrane segment spans residues 115 to 135; it reads KQVMWAIFIYSCQTTIVVLVL. Over 136–153 the chain is Extracellular; it reads RERVKKFVTSPDKRFDEA. Residues 154 to 174 traverse the membrane as a helical segment; that stretch reads IYNVIFISLLFTNFLLPVASW. The Cytoplasmic portion of the chain corresponds to 175–206; sequence RHGPQVAIFKNMWTNYQYKFFKTTGSPIVFPN. Residues 207–227 traverse the membrane as a helical segment; sequence LYPLTWSLCVFSWLLSIAINL. The Extracellular portion of the chain corresponds to 228-237; that stretch reads SQYFLQPDFR. A helical membrane pass occupies residues 238–258; that stretch reads LWYTFAYYPIIAMLNCFCSLW. The Cytoplasmic portion of the chain corresponds to 259–312; that stretch reads YINCNAFGTASRALSDALQTTIRGEKPAQKLTEYRHLWVDLSHMMQQLGRAYSN. Residues 313–333 form a helical membrane-spanning segment; it reads MYGMYCLVIFFTTIIATYGSI. Residues 334–345 lie on the Extracellular side of the membrane; it reads SEIIDHGATYKE. The helical transmembrane segment at 346-366 threads the bilayer; it reads VGLFVIVFYCMGLLYIICNEA. The Cytoplasmic portion of the chain corresponds to 367–422; that stretch reads HYASRKVGLDFQTKLLNINLTAVDAATQKEVEMLLVAINKNPPIMNLDGYANINRE. A helical transmembrane segment spans residues 423–443; sequence LITTNISFMATYLVVLLQFKI. Topologically, residues 444–454 are extracellular; it reads TEQRRIGQQQA.

The protein belongs to the insect chemoreceptor superfamily. Gustatory receptor (GR) family. Gr21a subfamily. In terms of assembly, gr21a and Gr63a probably form a heterodimer that responds to CO(2). As to expression, expressed in the adult labellar chemosensory neurons. Carbon dioxide-responsive neurons coexpress Gr21a and Gr63a in a pair of chemosensory receptors at both larval and adult life stages. A single bilateral neuron, expressing the Gr21a receptor, is responsible for CO(2) detection in larvae.

The protein localises to the cell membrane. Its function is as follows. Gustatory and odorant receptor which mediates acceptance or avoidance behavior, depending on its substrates. Gr21a and Gr63a together are sufficient for carbon dioxide detection and avoidance behavior. It is possible that the CO(2) receptors Gr63a and Gr21a activate the TRPC channels through Galpha49B and Plc21C. This innate olfactory avoidance behavior can be inhibited by inhibitory interactions of the odors such as 1-hexanol and 2,3-butanedione with Gr21a and Gr63a. This Drosophila melanogaster (Fruit fly) protein is Gustatory and odorant receptor 21a (Gr21a).